Here is a 161-residue protein sequence, read N- to C-terminus: Allophycocyanin alpha chain (161 aa).

Asn-71 bears the N4-methylasparagine mark. Residue Cys-81 participates in (2R,3E)-phycocyanobilin binding.

Belongs to the phycobiliprotein family. As to quaternary structure, heterodimer of an alpha and a beta chain. Contains one covalently linked phycocyanobilin chromophore.

The protein resides in the plastid. The protein localises to the chloroplast thylakoid membrane. Functionally, light-harvesting photosynthetic bile pigment-protein from the phycobiliprotein complex. Allophycocyanin has a maximum absorption at approximately 650 nanometers. This Galdieria sulphuraria (Red alga) protein is Allophycocyanin alpha chain (apcA).